The chain runs to 629 residues: 1-deoxy-D-xylulose-5-phosphate synthase (629 aa).

Thiamine diphosphate-binding positions include His-73 and 114–116 (GHA). Asp-145 provides a ligand contact to Mg(2+). Residues 146 to 147 (GA), Asn-174, Tyr-284, and Glu-360 each bind thiamine diphosphate. Asn-174 serves as a coordination point for Mg(2+).

The protein belongs to the transketolase family. DXPS subfamily. In terms of assembly, homodimer. Requires Mg(2+) as cofactor. Thiamine diphosphate is required as a cofactor.

The catalysed reaction is D-glyceraldehyde 3-phosphate + pyruvate + H(+) = 1-deoxy-D-xylulose 5-phosphate + CO2. The protein operates within metabolic intermediate biosynthesis; 1-deoxy-D-xylulose 5-phosphate biosynthesis; 1-deoxy-D-xylulose 5-phosphate from D-glyceraldehyde 3-phosphate and pyruvate: step 1/1. In terms of biological role, catalyzes the acyloin condensation reaction between C atoms 2 and 3 of pyruvate and glyceraldehyde 3-phosphate to yield 1-deoxy-D-xylulose-5-phosphate (DXP). This is 1-deoxy-D-xylulose-5-phosphate synthase from Thermomicrobium roseum (strain ATCC 27502 / DSM 5159 / P-2).